A 79-amino-acid polypeptide reads, in one-letter code: UPF0154 protein SAK_1616 (79 aa).

Residues 5–25 (IWILLIIVALFGGLVGGIFIA) traverse the membrane as a helical segment.

This sequence belongs to the UPF0154 family.

It localises to the cell membrane. In Streptococcus agalactiae serotype Ia (strain ATCC 27591 / A909 / CDC SS700), this protein is UPF0154 protein SAK_1616.